A 426-amino-acid chain; its full sequence is Coiled-coil domain-containing protein 86 (426 aa).

Residues 1-426 (MDTPLRRSRR…QPPQRPVAKV (426 aa)) are disordered. Residue S18 is modified to Phosphoserine. Residues 33-49 (ALVDFKSNSEETGELKS) show a composition bias toward basic and acidic residues. The span at 55-145 (LSLPSPGPQP…SLPSPGPQPE (91 aa)) shows a compositional bias: pro residues. S59 is modified (phosphoserine). T66 is modified (phosphothreonine). Phosphoserine occurs at positions 67, 70, 161, 172, 183, 191, 194, 225, 252, 253, and 283. Residues 241 to 255 (QPAQELTVQAPSSPE) show a composition bias toward polar residues. Basic residues predominate over residues 304–320 (GKPKSGRVWKDRSKKRF). Residues 339–383 (ERQERKLAKDFARHLEEEKQRRRQEKKERRAENLRRRLENERKAE) show a composition bias toward basic and acidic residues. The stretch at 346–389 (AKDFARHLEEEKQRRRQEKKERRAENLRRRLENERKAEIVQVIR) forms a coiled coil. Residues 392 to 402 (AKLKKAKKKQL) show a composition bias toward basic residues. At R408 the chain carries Citrulline.

Citrullinated by PADI4. In terms of tissue distribution, highly expressed in testis. Also expressed in heart, liver, kidney.

The protein localises to the nucleus. It localises to the chromosome. It is found in the nucleolus. Required for proper chromosome segregation during mitosis and error-free mitotic progression. The protein is Coiled-coil domain-containing protein 86 of Mus musculus (Mouse).